We begin with the raw amino-acid sequence, 239 residues long: MSNKKDVAVKISGGKKIREAREKVKSDTLYNLTNAVERLKSASYVKFDPTLEIVMKLGIDSRHSDQMVRGVVNLPAGTGKTVRVAVICKEEREEEAKSAGADLVGSTNIIDEIKAGKINFDVCIATPDMMAAIGSVARILGPKGLMPNPKLGTVTLDIKNAIKNAKSGQVEYRAEKAGIIHAGLGKLSFSDQDLLKNLNAFIEAVIKAKPAGLKGSYLKAMYLSSTMGASVQIDLTSIA.

Belongs to the universal ribosomal protein uL1 family. In terms of assembly, part of the 50S ribosomal subunit.

Its function is as follows. Binds directly to 23S rRNA. The L1 stalk is quite mobile in the ribosome, and is involved in E site tRNA release. Functionally, protein L1 is also a translational repressor protein, it controls the translation of the L11 operon by binding to its mRNA. This chain is Large ribosomal subunit protein uL1, found in Rickettsia conorii (strain ATCC VR-613 / Malish 7).